The primary structure comprises 929 residues: Lon protease homolog 2, peroxisomal (929 aa).

The region spanning 11–257 is the Lon N-terminal domain; that stretch reads LPLVPLPKGS…RVVEILTRQL (247 aa). The segment at 302-325 is disordered; sequence GLTPPGLSAGRNNDNDDKESNEVD. Position 484 to 491 (484 to 491) interacts with ATP; it reads GPPGVGKT. Residues 727–914 form the Lon proteolytic domain; that stretch reads HGRPGVVTGL…WEAIRQVWPD (188 aa). Active-site residues include Ser-820 and Lys-863. Residues 927-929 carry the Microbody targeting signal motif; that stretch reads SRL.

This sequence belongs to the peptidase S16 family.

It is found in the peroxisome matrix. The enzyme catalyses Hydrolysis of proteins in presence of ATP.. Its function is as follows. ATP-dependent serine protease that mediates the selective degradation of misfolded and unassembled polypeptides in the peroxisomal matrix. Necessary for type 2 peroxisome targeting signal (PTS2)-containing protein processing and facilitates peroxisome matrix protein import. In Aspergillus niger (strain ATCC MYA-4892 / CBS 513.88 / FGSC A1513), this protein is Lon protease homolog 2, peroxisomal.